We begin with the raw amino-acid sequence, 821 residues long: Phenylalanine--tRNA ligase beta subunit (821 aa).

Positions 39–149 constitute a tRNA-binding domain; sequence SENVKGIVLG…EDIALNHNLG (111 aa). The region spanning 414-507 is the B5 domain; the sequence is LKKILIPLRR…RLIGYDMFDL (94 aa). Asp-485, Asp-491, Glu-494, and Glu-495 together coordinate Mg(2+). Residues 727-820 form the FDX-ACB domain; the sequence is PTVPKMERDI…IEKKFSTKLR (94 aa).

The protein belongs to the phenylalanyl-tRNA synthetase beta subunit family. Type 1 subfamily. As to quaternary structure, tetramer of two alpha and two beta subunits. It depends on Mg(2+) as a cofactor.

Its subcellular location is the cytoplasm. It carries out the reaction tRNA(Phe) + L-phenylalanine + ATP = L-phenylalanyl-tRNA(Phe) + AMP + diphosphate + H(+). This Prochlorococcus marinus subsp. pastoris (strain CCMP1986 / NIES-2087 / MED4) protein is Phenylalanine--tRNA ligase beta subunit.